The following is a 497-amino-acid chain: uncharacterized protein (497 aa).

Residue 266–273 participates in ATP binding; sequence GIQGTGKS.

The protein belongs to the AAA ATPase family. Highly divergent.

The protein resides in the plastid. Its subcellular location is the chloroplast. This is an uncharacterized protein from Trieres chinensis (Marine centric diatom).